Consider the following 110-residue polypeptide: Secreted RxLR effector protein 89 (110 aa).

A signal peptide spans 1 to 22; that stretch reads MTSVVIVVSVAVLLGVLVITDS. N29 carries an N-linked (GlcNAc...) asparagine glycan. The RxLR-dEER motif lies at 61–74; it reads RHLRTILQWWQERR.

It belongs to the RxLR effector family.

Its subcellular location is the secreted. It localises to the host nucleus. It is found in the host cytoplasm. In terms of biological role, secreted effector that completely suppresses the host cell death induced by cell death-inducing proteins. This is Secreted RxLR effector protein 89 from Plasmopara viticola (Downy mildew of grapevine).